We begin with the raw amino-acid sequence, 151 residues long: Protein SprT-like (151 aa).

A SprT-like domain is found at 7–147 (QKLTESISES…GKCKGKLHLH (141 aa)). Zn(2+) is bound at residue histidine 67. Residue glutamate 68 is part of the active site. Residue histidine 71 participates in Zn(2+) binding.

This sequence belongs to the SprT family. Requires Zn(2+) as cofactor.

The protein localises to the cytoplasm. This chain is Protein SprT-like, found in Staphylococcus carnosus (strain TM300).